We begin with the raw amino-acid sequence, 333 residues long: NADH-ubiquinone oxidoreductase chain 2 (333 aa).

10 helical membrane-spanning segments follow: residues 10 to 30 (WFIY…NIFI), 57 to 77 (LIYY…IIVY), 91 to 111 (FMVQ…FWMI), 121 to 141 (QIFL…VSMT), 143 to 163 (INSW…FYAN), 170 to 190 (KLLA…LELN), 192 to 212 (NMFI…ISFL), 242 to 262 (MYPI…MVSV), 267 to 287 (WILF…IIIL), and 313 to 333 (SYFA…LNFL).

Belongs to the complex I subunit 2 family.

It is found in the mitochondrion inner membrane. It carries out the reaction a ubiquinone + NADH + 5 H(+)(in) = a ubiquinol + NAD(+) + 4 H(+)(out). In terms of biological role, core subunit of the mitochondrial membrane respiratory chain NADH dehydrogenase (Complex I) that is believed to belong to the minimal assembly required for catalysis. Complex I functions in the transfer of electrons from NADH to the respiratory chain. The immediate electron acceptor for the enzyme is believed to be ubiquinone. This Apis mellifera ligustica (Common honeybee) protein is NADH-ubiquinone oxidoreductase chain 2 (ND2).